Reading from the N-terminus, the 290-residue chain is 4-hydroxy-tetrahydrodipicolinate synthase (290 aa).

Position 44 (Thr44) interacts with pyruvate. Catalysis depends on Tyr131, which acts as the Proton donor/acceptor. The Schiff-base intermediate with substrate role is filled by Lys159. Ile201 contacts pyruvate.

This sequence belongs to the DapA family. In terms of assembly, homotetramer; dimer of dimers.

It localises to the cytoplasm. It catalyses the reaction L-aspartate 4-semialdehyde + pyruvate = (2S,4S)-4-hydroxy-2,3,4,5-tetrahydrodipicolinate + H2O + H(+). The protein operates within amino-acid biosynthesis; L-lysine biosynthesis via DAP pathway; (S)-tetrahydrodipicolinate from L-aspartate: step 3/4. Functionally, catalyzes the condensation of (S)-aspartate-beta-semialdehyde [(S)-ASA] and pyruvate to 4-hydroxy-tetrahydrodipicolinate (HTPA). The chain is 4-hydroxy-tetrahydrodipicolinate synthase from Jannaschia sp. (strain CCS1).